Consider the following 171-residue polypeptide: 3-hydroxydecanoyl-[acyl-carrier-protein] dehydratase (171 aa).

Histidine 70 is an active-site residue.

It belongs to the thioester dehydratase family. FabA subfamily. As to quaternary structure, homodimer.

Its subcellular location is the cytoplasm. It carries out the reaction a (3R)-hydroxyacyl-[ACP] = a (2E)-enoyl-[ACP] + H2O. The enzyme catalyses (3R)-hydroxydecanoyl-[ACP] = (2E)-decenoyl-[ACP] + H2O. The catalysed reaction is (2E)-decenoyl-[ACP] = (3Z)-decenoyl-[ACP]. The protein operates within lipid metabolism; fatty acid biosynthesis. In terms of biological role, necessary for the introduction of cis unsaturation into fatty acids. Catalyzes the dehydration of (3R)-3-hydroxydecanoyl-ACP to E-(2)-decenoyl-ACP and then its isomerization to Z-(3)-decenoyl-ACP. Can catalyze the dehydratase reaction for beta-hydroxyacyl-ACPs with saturated chain lengths up to 16:0, being most active on intermediate chain length. This chain is 3-hydroxydecanoyl-[acyl-carrier-protein] dehydratase, found in Nitrosococcus oceani (strain ATCC 19707 / BCRC 17464 / JCM 30415 / NCIMB 11848 / C-107).